The primary structure comprises 612 residues: Dihydroxy-acid dehydratase (612 aa).

D81 lines the Mg(2+) pocket. [2Fe-2S] cluster is bound at residue C122. Residues D123 and K124 each contribute to the Mg(2+) site. K124 is modified (N6-carboxylysine). C193 contacts [2Fe-2S] cluster. Residue E489 participates in Mg(2+) binding. S515 (proton acceptor) is an active-site residue.

The protein belongs to the IlvD/Edd family. Homodimer. [2Fe-2S] cluster serves as cofactor. It depends on Mg(2+) as a cofactor.

It carries out the reaction (2R)-2,3-dihydroxy-3-methylbutanoate = 3-methyl-2-oxobutanoate + H2O. The enzyme catalyses (2R,3R)-2,3-dihydroxy-3-methylpentanoate = (S)-3-methyl-2-oxopentanoate + H2O. It participates in amino-acid biosynthesis; L-isoleucine biosynthesis; L-isoleucine from 2-oxobutanoate: step 3/4. It functions in the pathway amino-acid biosynthesis; L-valine biosynthesis; L-valine from pyruvate: step 3/4. Functionally, functions in the biosynthesis of branched-chain amino acids. Catalyzes the dehydration of (2R,3R)-2,3-dihydroxy-3-methylpentanoate (2,3-dihydroxy-3-methylvalerate) into 2-oxo-3-methylpentanoate (2-oxo-3-methylvalerate) and of (2R)-2,3-dihydroxy-3-methylbutanoate (2,3-dihydroxyisovalerate) into 2-oxo-3-methylbutanoate (2-oxoisovalerate), the penultimate precursor to L-isoleucine and L-valine, respectively. The protein is Dihydroxy-acid dehydratase of Xanthomonas euvesicatoria pv. vesicatoria (strain 85-10) (Xanthomonas campestris pv. vesicatoria).